The sequence spans 700 residues: MARTTPIERYRNIGISAHIDAGKTTTSERILFYTGVSHKIGEVHDGAATMDWMEQEQERGITITSAATTAFWSGMSQQYPQHRINVIDTPGHVDFTIEVERSMRVLDGAVMVYCAVGGVQPQSETVWRQANKYKVPRIAFVNKMDRTGANFLRVVEQIKTRLGGNSVPLQLPIGAEENFTGVVDLIKMKAINWNEADQGMTFTYEDVPANMLAECEEWRNNLVEAAAEASEELMEKFFAGEELTEEEIKTALRQRVLSGEVIPVCCGSAFKNKGVQAMLDAVIDYLPAPTDIPAIEGINEDGTPGERHASDDEPFSSLAFKIATDPFVGNLTFFRVYSGVINSGDTVYNSVKQKRERFGRIVQMHANKRDEIKEVRAGDIAAAIGLKDVGTGDTLCAQEAPIILERMEFPEPVISVAVEPKTKADQEKMGLALGRLAQEDPSFRVHTDEESGETIISGMGELHLDIIVDRMKREFKVEANIGKPQVSYRETIRTRVNDVEGKHAKQSGGRGQYGHVVIDLYPLDPEGPGYEFVNEIKGGVIPGEYIPAVDKGIQEQLKSGPLAGYPVVDLGVRLHFGSYHDVDSSELAFKLAASLAFKAAFAKANPVLLEPIMKVEVETPPDYVGDVIGDLSRRRAMVNGQEANEFVVKINAEVPLSEMFGYATDLRSQTQGRASYSMEPLKYAEAPTSVAAAVIEARKK.

Positions 8–290 (ERYRNIGISA…AVIDYLPAPT (283 aa)) constitute a tr-type G domain. Residues 17–24 (AHIDAGKT), 88–92 (DTPGH), and 142–145 (NKMD) each bind GTP.

This sequence belongs to the TRAFAC class translation factor GTPase superfamily. Classic translation factor GTPase family. EF-G/EF-2 subfamily.

It localises to the cytoplasm. Functionally, catalyzes the GTP-dependent ribosomal translocation step during translation elongation. During this step, the ribosome changes from the pre-translocational (PRE) to the post-translocational (POST) state as the newly formed A-site-bound peptidyl-tRNA and P-site-bound deacylated tRNA move to the P and E sites, respectively. Catalyzes the coordinated movement of the two tRNA molecules, the mRNA and conformational changes in the ribosome. This Glaesserella parasuis serovar 5 (strain SH0165) (Haemophilus parasuis) protein is Elongation factor G.